An 885-amino-acid chain; its full sequence is MAPPSTREPRVLSATSATKSDGEMVLPGFPDADSFVKFALGSVVAVTKASGGLPQFGDEYDFYRSFPGFQAFCETQGDRLLQCMSRVMQYHGCRSNIKDRSKVTELEDKFDLLVDANDVILERVGILLDEASGVNKNQQPVLPAGLQVPKTVVSSWNRKAAEYGKKAKSETFRLLHAKNIIRPQLKFREKIDNSNTPFLPKIFIKPNAQKPLPQALSKERRERPQDRPEDLDVPPALADFIHQQRTQQVEQDMFAHPYQYELNHFTPADAVLQKPQPQLYRPIEETPCHFISSLDELVELNEKLLNCQEFAVDLEHHSYRSFLGLTCLMQISTRTEDFIIDTLELRSDMYILNESLTDPAIVKVFHGADSDIEWLQKDFGLYVVNMFDTHQAARLLNLGRHSLDHLLKLYCNVDSNKQYQLADWRIRPLPEEMLSYARDDTHYLLYIYDKMRLEMWERGNGQPVQLQVVWQRSRDICLKKFIKPIFTDESYLELYRKQKKHLNTQQLTAFQLLFAWRDKTARREDESYGYVLPNHMMLKIAEELPKEPQGIIACCNPVPPLVRQQINEMHLLIQQAREMPLLKSEVAAGVKKSGPLPSAERLENVLFGPHDCSHAPPDGYPIIPTSGSVPVQKQASLFPDEKEDNLLGTTCLIATAVITLFNEPSAEDSKKGPLTVAQKKAQNIMESFENPFRMFLPSLGHRAPVSQAAKFDPSTKIYEISNRWKLAQVQVQKDSKEAVKKKAAEQTAAREQAKEACKAAAEQAISVRQQVVLENAAKKRERATSDPRTTEQKQEKKRLKISKKPKDPEPPEKEFTPYDYSQSDFKAFAGNSKSKVSSQFDPNKQTPSGKKCIAAKKIKQSVGNKSMSFPTGKSDRGFRYNWPQR.

Lys19 participates in a covalent cross-link: Glycyl lysine isopeptide (Lys-Gly) (interchain with G-Cter in SUMO2). The 3'-5' exonuclease domain maps to 289–455 (HFISSLDELV…YIYDKMRLEM (167 aa)). Mg(2+) is bound by residues Asp313, Glu315, Asp371, and Asp440. Positions 503 to 583 (NTQQLTAFQL…QQAREMPLLK (81 aa)) constitute an HRDC domain. Residue Lys583 forms a Glycyl lysine isopeptide (Lys-Gly) (interchain with G-Cter in SUMO1); alternate linkage. Lys583 is covalently cross-linked (Glycyl lysine isopeptide (Lys-Gly) (interchain with G-Cter in SUMO2); alternate). Lys710 participates in a covalent cross-link: Glycyl lysine isopeptide (Lys-Gly) (interchain with G-Cter in SUMO2). Composition is skewed to basic and acidic residues over residues 776–794 (AAKK…EQKQ) and 804–816 (KPKD…KEFT). A disordered region spans residues 776–885 (AAKKRERATS…RGFRYNWPQR (110 aa)). Ser821 is subject to Phosphoserine. Glycyl lysine isopeptide (Lys-Gly) (interchain with G-Cter in SUMO2) cross-links involve residues Lys826, Lys833, and Lys859. The span at 831–848 (NSKSKVSSQFDPNKQTPS) shows a compositional bias: polar residues. The segment covering 861–871 (SVGNKSMSFPT) has biased composition (polar residues). A Glycyl lysine isopeptide (Lys-Gly) (interchain with G-Cter in SUMO2) cross-link involves residue Lys873.

The protein belongs to the exosome component 10/RRP6 family. As to quaternary structure, component of the RNA exosome complex. The catalytically inactive RNA exosome core complex (Exo-9) associates with the catalytic subunit EXOSC10/RRP6 (via its N-terminus). Exo-9 may associate with DIS3 to form the nucleolar exosome complex, or DIS3L to form the cytoplasmic exosome complex. The RNA exosome complex interacts with cofactors C1D/RRP47, MPHOSPH6/MPP6 and MTREX/MTR4. Interacts with MTREX; the interaction with MTREX mediates the association of MTREX with nuclear RNA exosomes. Part of the small subunit (SSU) processome, composed of more than 70 proteins and the RNA chaperone small nucleolar RNA (snoRNA) U3. Interacts with ALYREF/THOC4. Interacts with DHX36; this interaction occurs in a RNase-insensitive manner. Interacts with NRDE2. Interacts (via C-terminus) with USP36 (via C-terminus); the interaction is facilitated by the association with RNA and promotes sumoylation of EXOSC10. Mg(2+) is required as a cofactor. Sumoylated by USP36; sumoylation does not significantly affect EXOSC10 nucleolar localization and association with core exosome and USP36, but regulates the nucleolar RNA exosome activity in rRNA processing by promoting binding of EXOSC10 to pre-rRNAs. Effects of sumoylation on EXOSC10 levels vary between different studies. Sumoylation of EXOSC10 is required for the modulation of EXOSC10 effects on cellular protein translation and cell proliferation. Sumoylation is promoted by mild hypothermia.

It localises to the cytoplasm. It is found in the nucleus. The protein localises to the nucleolus. Its subcellular location is the nucleoplasm. Arginine-rich dipeptide repeat proteins expressed from C9orf72-derived repeat RNA interact with EXOSC10 and inhibit its ability to promote degradation of this RNA. In terms of biological role, catalytic component of the RNA exosome complex which has 3'-&gt;5' exoribonuclease activity and participates in a multitude of cellular RNA processing and degradation events. In the nucleus, the RNA exosome complex is involved in proper maturation of stable RNA species such as rRNA, snRNA and snoRNA, in the elimination of RNA processing by-products and non-coding 'pervasive' transcripts, such as antisense RNA species and promoter-upstream transcripts (PROMPTs), and of mRNAs with processing defects, thereby limiting or excluding their export to the cytoplasm. Part of the small subunit (SSU) processome, first precursor of the small eukaryotic ribosomal subunit. During the assembly of the SSU processome in the nucleolus, many ribosome biogenesis factors, an RNA chaperone and ribosomal proteins associate with the nascent pre-rRNA and work in concert to generate RNA folding, modifications, rearrangements and cleavage as well as targeted degradation of pre-ribosomal RNA by the RNA exosome. The RNA exosome may be involved in Ig class switch recombination (CSR) and/or Ig variable region somatic hypermutation (SHM) by targeting AICDA deamination activity to transcribed dsDNA substrates. In the cytoplasm, the RNA exosome complex is involved in general mRNA turnover and specifically degrades inherently unstable mRNAs containing AU-rich elements (AREs) within their 3' untranslated regions, and in RNA surveillance pathways, preventing translation of aberrant mRNAs. It seems to be involved in degradation of histone mRNA. EXOSC10 is required for nucleolar localization of C1D and probably mediates the association of MTREX, C1D and MPHOSPH6 with the RNA exosome involved in the maturation of 5.8S rRNA. Plays a role in the recruitment of replication protein A complex (RPA) and RAD51 to DNA double-strand breaks caused by irradiation, contributing to DNA repair by homologous recombination. Regulates levels of damage-induced RNAs in order to prevent DNA-RNA hybrid formation at DNA double-strand breaks and limit DNA end resection after damage. Plays a role in oocyte development, maturation and survival. Required for normal testis development and mitotic division of spermatogonia. Plays a role in proper embryo development. Required for global protein translation. Required for cell proliferation. Regulates metabolism of C9orf72-derived repeat RNA that can be translated into toxic dipeptide repeat proteins. This chain is Exosome complex component 10, found in Homo sapiens (Human).